We begin with the raw amino-acid sequence, 290 residues long: Ribosomal RNA small subunit methyltransferase A (290 aa).

S-adenosyl-L-methionine is bound by residues Asn27, Leu29, Gly54, Glu75, Asp100, and Asn125.

This sequence belongs to the class I-like SAM-binding methyltransferase superfamily. rRNA adenine N(6)-methyltransferase family. RsmA subfamily.

It localises to the cytoplasm. The catalysed reaction is adenosine(1518)/adenosine(1519) in 16S rRNA + 4 S-adenosyl-L-methionine = N(6)-dimethyladenosine(1518)/N(6)-dimethyladenosine(1519) in 16S rRNA + 4 S-adenosyl-L-homocysteine + 4 H(+). Specifically dimethylates two adjacent adenosines (A1518 and A1519) in the loop of a conserved hairpin near the 3'-end of 16S rRNA in the 30S particle. May play a critical role in biogenesis of 30S subunits. The protein is Ribosomal RNA small subunit methyltransferase A of Streptococcus pneumoniae (strain 70585).